Consider the following 347-residue polypeptide: Olfactory receptor 6J1 (347 aa).

Topologically, residues 1–24 (MGNWTAAVTEFVLLGFSLSREVEL) are extracellular. An N-linked (GlcNAc...) asparagine glycan is attached at N3. A helical membrane pass occupies residues 25 to 45 (LLLVLLLPTFLLTLLGNLLII). Residues 46 to 53 (STVLSCSR) are Cytoplasmic-facing. The chain crosses the membrane as a helical span at residues 54 to 74 (LHTPMYFFLCNLSILDILFTS). Residues 75 to 98 (VISPKVLANLGSRDKTISFAGCIT) lie on the Extracellular side of the membrane. Residues C96 and C188 are joined by a disulfide bond. A helical membrane pass occupies residues 99–119 (QCYFYFFLGTVEFLLLTVMSY). The Cytoplasmic segment spans residues 120–138 (DRYATICCPLRYTTIMRPS). A helical transmembrane segment spans residues 139–159 (VCIGTVVFSWVGGFLSVLFPT). Residues 160-196 (ILISQLPFCGSNIINHFFCDSGPLLALACADTTAIEL) are Extracellular-facing. Residues 197–216 (MDFMLSSMVILCCIVLVAYS) traverse the membrane as a helical segment. The Cytoplasmic portion of the chain corresponds to 217 to 236 (YTYIILTIVRIPSASGRKKA). The helical transmembrane segment at 237–257 (FNTCASHLTIVIISSGITVFI) threads the bilayer. Over 258 to 270 (YVTPSQKEYLEIN) the chain is Extracellular. The chain crosses the membrane as a helical span at residues 271 to 291 (KIPLVLSSVVTPFLNPFIYTL). The Cytoplasmic portion of the chain corresponds to 292–347 (RNDTVQGVLRDVWVRVRGVFEKRMRAVLRSRLSSNKDHQGRACSSPPCVYSVKLQC).

This sequence belongs to the G-protein coupled receptor 1 family.

The protein localises to the cell membrane. Its function is as follows. Odorant receptor. The protein is Olfactory receptor 6J1 (OR6J1) of Homo sapiens (Human).